The sequence spans 43 residues: Protein PsbN (43 aa).

The helical transmembrane segment at 5–27 (TLVAISISGLLVSFTGYALYTAF) threads the bilayer.

It belongs to the PsbN family.

The protein localises to the plastid. It localises to the chloroplast thylakoid membrane. May play a role in photosystem I and II biogenesis. In Eucalyptus globulus subsp. globulus (Tasmanian blue gum), this protein is Protein PsbN.